A 142-amino-acid polypeptide reads, in one-letter code: Large-conductance mechanosensitive channel (142 aa).

2 helical membrane-spanning segments follow: residues 14 to 34 (VMDL…VDSV) and 82 to 102 (GNFI…FLLI).

This sequence belongs to the MscL family. As to quaternary structure, homopentamer.

The protein localises to the cell inner membrane. Its function is as follows. Channel that opens in response to stretch forces in the membrane lipid bilayer. May participate in the regulation of osmotic pressure changes within the cell. The sequence is that of Large-conductance mechanosensitive channel from Sinorhizobium medicae (strain WSM419) (Ensifer medicae).